We begin with the raw amino-acid sequence, 124 residues long: UPF0231 protein Shewmr4_0656 (124 aa).

The protein belongs to the UPF0231 family.

In Shewanella sp. (strain MR-4), this protein is UPF0231 protein Shewmr4_0656.